Consider the following 233-residue polypeptide: uncharacterized protein (233 aa).

Disordered regions lie at residues 1 to 159 (MGKH…NEKL) and 181 to 206 (MGVK…QDKM). The span at 36–115 (RDRSRSPHKE…RRDDKNRLSA (80 aa)) shows a compositional bias: basic and acidic residues. Residues 135–148 (SSSSNTTDTASSSS) are compositionally biased toward low complexity. Over residues 189–206 (PTDDSSRLSDEKNRQDKM) the composition is skewed to basic and acidic residues.

This is an uncharacterized protein from Caenorhabditis elegans.